The sequence spans 874 residues: Alanine--tRNA ligase (874 aa).

The Zn(2+) site is built by His564, His568, Cys665, and His669.

Belongs to the class-II aminoacyl-tRNA synthetase family. Zn(2+) is required as a cofactor.

The protein resides in the cytoplasm. It carries out the reaction tRNA(Ala) + L-alanine + ATP = L-alanyl-tRNA(Ala) + AMP + diphosphate. Catalyzes the attachment of alanine to tRNA(Ala) in a two-step reaction: alanine is first activated by ATP to form Ala-AMP and then transferred to the acceptor end of tRNA(Ala). Also edits incorrectly charged Ser-tRNA(Ala) and Gly-tRNA(Ala) via its editing domain. The chain is Alanine--tRNA ligase from Burkholderia vietnamiensis (strain G4 / LMG 22486) (Burkholderia cepacia (strain R1808)).